Reading from the N-terminus, the 173-residue chain is Ribosome maturation factor RimM (173 aa).

The region spanning 102–173 is the PRC barrel domain; sequence EGEYYWSDLI…TMLVDWDPEF (72 aa).

This sequence belongs to the RimM family. In terms of assembly, binds ribosomal protein uS19.

The protein localises to the cytoplasm. Its function is as follows. An accessory protein needed during the final step in the assembly of 30S ribosomal subunit, possibly for assembly of the head region. Essential for efficient processing of 16S rRNA. May be needed both before and after RbfA during the maturation of 16S rRNA. It has affinity for free ribosomal 30S subunits but not for 70S ribosomes. The sequence is that of Ribosome maturation factor RimM from Methylobacillus flagellatus (strain ATCC 51484 / DSM 6875 / VKM B-1610 / KT).